Reading from the N-terminus, the 261-residue chain is MAIRHVKRRYSESSESSSSDESVVDSTEISVDINDDDAVKPDNEESQLEGERDMATNDGMENNGCSDLSSDSEDSSSEESDEEPVFQRPIFIKRNQLAEVTDSNNQGNVLRRIEHENKVVEQNEEAKKQIATNYTTDKEILMKAMSLNDNDLIDPEGERLRWLERQKIRKEKYRKKLIDKQLELEEYEANKLLNRDIDKLEENTTTTTGEKDIPIKKSNRINNNKGDNEFKPKRVVNVTFKSLDDNETSAVANEDSEYSIL.

Disordered regions lie at residues 1-88 and 205-229; these read MAIR…VFQR and TTTT…GDNE. A compositionally biased stretch (low complexity) spans 13 to 32; sequence SSESSSSDESVVDSTEISVD. Basic and acidic residues predominate over residues 37–55; sequence DAVKPDNEESQLEGERDMA. Over residues 70–84 the composition is skewed to acidic residues; sequence SDSEDSSSEESDEEP.

The protein belongs to the SPP381 family. In terms of assembly, component of the 25S U4/U6.U5 tri-snRNP particle, a subcomplex of the spliceosome.

It localises to the nucleus. Component of the spliceosome and rRNA processing machinery. In association with the spliceosomal U4/U6.U5 tri-snRNP particle, required for splicing of pre-mRNA. The polypeptide is Pre-mRNA-splicing factor SPP381 (SPP381) (Vanderwaltozyma polyspora (strain ATCC 22028 / DSM 70294 / BCRC 21397 / CBS 2163 / NBRC 10782 / NRRL Y-8283 / UCD 57-17) (Kluyveromyces polysporus)).